Here is a 1257-residue protein sequence, read N- to C-terminus: ATP-binding cassette sub-family B member 5 (1257 aa).

The disordered stretch occupies residues 1–24 (MENSERAEEMQENYQRNGTAEEQP). An N-linked (GlcNAc...) asparagine glycan is attached at asparagine 17. A helical membrane pass occupies residues 49 to 69 (ILGILASLVNGACLPLMPLVL). Residues 49-350 (ILGILASLVN…AAVPHFETFA (302 aa)) enclose the ABC transmembrane type-1 1 domain. N-linked (GlcNAc...) asparagine glycosylation is found at asparagine 85 and asparagine 91. The next 5 membrane-spanning stretches (helical) occupy residues 110-130 (YVGI…LWII), 181-201 (KIAL…VGLV), 203-223 (GWKL…SAAA), 294-314 (VYFF…SLIL), and 322-342 (IGTV…IGAA). Asparagine 371, asparagine 390, and asparagine 423 each carry an N-linked (GlcNAc...) asparagine glycan. Positions 386–622 (VEFKNVSFNY…RGLYYSLVMS (237 aa)) constitute an ABC transporter 1 domain. 421 to 428 (GLNGSGKS) serves as a coordination point for ATP. The next 2 helical transmembrane spans lie at 693–713 (VLGT…SIIF) and 737–757 (MIFV…GLFY). One can recognise an ABC transmembrane type-1 2 domain in the interval 693–980 (VLGTLASVLN…TLVLAPEYSK (288 aa)). 2 N-linked (GlcNAc...) asparagine glycosylation sites follow: asparagine 789 and asparagine 819. The helical transmembrane segment at 827-847 (VIISFIYGWEMTFLILSIAPV) threads the bilayer. A glycan (N-linked (GlcNAc...) asparagine) is linked at asparagine 910. A run of 2 helical transmembrane segments spans residues 917–937 (IIGS…AAGF) and 954–974 (MFIV…TLVL). The 239-residue stretch at 1015–1253 (LEFREVSFFY…RDIYFKLVNA (239 aa)) folds into the ABC transporter 2 domain. Residue 1050 to 1057 (GSSGCGKS) participates in ATP binding. 2 N-linked (GlcNAc...) asparagine glycosylation sites follow: asparagine 1104 and asparagine 1188.

Belongs to the ABC transporter superfamily. ABCB family. Multidrug resistance exporter (TC 3.A.1.201) subfamily. In terms of tissue distribution, expressed by CD133-expressing progenitor cells among epidermal melanocytes (at protein level). Widely expressed with specific expression in pigment cells. Highly expressed in several malignant tissues: highly expressed in clinical melanomas, with low expression in normal skin. In melanoma, marks malignant melanoma-initiating cells (MMIC), in which clinical virulence resides as a consequence of unlimited self-renewal capacity, resulting in inexorable tumor progression and metastasis. Also highly expressed in a number of leukemia cells. Expressed in basal limbal epithelium.

Its subcellular location is the cell membrane. It carries out the reaction daunorubicin(in) + ATP + H2O = daunorubicin(out) + ADP + phosphate + H(+). Energy-dependent efflux transporter responsible for decreased drug accumulation in multidrug-resistant cells. Specifically present in limbal stem cells, where it plays a key role in corneal development and repair. In Homo sapiens (Human), this protein is ATP-binding cassette sub-family B member 5.